Here is a 239-residue protein sequence, read N- to C-terminus: Ion-translocating oxidoreductase complex subunit E (239 aa).

Transmembrane regions (helical) follow at residues 41 to 61 (LGLG…VSLV), 71 to 91 (LPAF…LMQA), 95 to 115 (ELYQ…VILG), 130 to 150 (SFDG…LGGL), and 184 to 204 (GFLL…LIAL).

The protein belongs to the NqrDE/RnfAE family. The complex is composed of six subunits: RnfA, RnfB, RnfC, RnfD, RnfE and RnfG.

The protein localises to the cell inner membrane. Part of a membrane-bound complex that couples electron transfer with translocation of ions across the membrane. The chain is Ion-translocating oxidoreductase complex subunit E from Pseudomonas paraeruginosa (strain DSM 24068 / PA7) (Pseudomonas aeruginosa (strain PA7)).